A 500-amino-acid polypeptide reads, in one-letter code: Ent-cassadiene C11-alpha-hydroxylase 1 (500 aa).

A helical transmembrane segment spans residues 4 to 24; it reads SQVWLLWGALSVAVLFYLSTL. Residue Cys-442 participates in heme binding.

This sequence belongs to the cytochrome P450 family. It depends on heme as a cofactor.

The protein resides in the membrane. The enzyme catalyses ent-cassa-12,15-diene + reduced [NADPH--hemoprotein reductase] + O2 = ent-11beta-hydroxycassa-12,15-diene + oxidized [NADPH--hemoprotein reductase] + H2O + H(+). In terms of biological role, enzyme of the diterpenoid metabolism involved in the biosynthesis of antibacterial oryzalides such as phytocassane. Can use ent-cassadiene as substrate, but not C11-alpha-hydroxy-ent-cassadiene, ent-pimaradiene, ent-sandaracopimaradiene, ent-kaurene, ent-isokaurene, syn-pimaradiene, syn-stemarene, syn-stemodene. The sequence is that of Ent-cassadiene C11-alpha-hydroxylase 1 from Oryza sativa subsp. japonica (Rice).